Reading from the N-terminus, the 939-residue chain is Protein translocase subunit SecA (939 aa).

ATP-binding positions include glutamine 85, 103 to 107, and aspartate 504; that span reads GEGKT. The segment at 850 to 939 is disordered; it reads PVQDGAERPS…KGGGGRRRKK (90 aa). Positions 854-864 are enriched in basic and acidic residues; sequence GAERPSLEKEG. The segment covering 924–939 has biased composition (basic residues); it reads ERRKAQKGGGGRRRKK.

Belongs to the SecA family. In terms of assembly, monomer and homodimer. Part of the essential Sec protein translocation apparatus which comprises SecA, SecYEG and auxiliary proteins SecDF. Other proteins may also be involved.

The protein localises to the cell membrane. It is found in the cytoplasm. It catalyses the reaction ATP + H2O + cellular proteinSide 1 = ADP + phosphate + cellular proteinSide 2.. In terms of biological role, part of the Sec protein translocase complex. Interacts with the SecYEG preprotein conducting channel. Has a central role in coupling the hydrolysis of ATP to the transfer of proteins into and across the cell membrane, serving as an ATP-driven molecular motor driving the stepwise translocation of polypeptide chains across the membrane. In Streptomyces griseus subsp. griseus (strain JCM 4626 / CBS 651.72 / NBRC 13350 / KCC S-0626 / ISP 5235), this protein is Protein translocase subunit SecA.